The chain runs to 321 residues: 6-phosphogluconolactonase-like protein 1 (321 aa).

A disordered region spans residues 36-85; it reads GKVSRSTQMSGTSLNGNGNTESKTMERVNSVRSNASSRGGSEDGATKKLK. Residues 39-57 show a composition bias toward polar residues; sequence SRSTQMSGTSLNGNGNTES. Residues 63–74 are compositionally biased toward low complexity; sequence VNSVRSNASSRG. Serine 65 and serine 68 each carry phosphoserine. Residues 75–85 show a composition bias toward basic and acidic residues; sequence GSEDGATKKLK. Phosphothreonine is present on threonine 320.

The protein belongs to the glucosamine/galactosamine-6-phosphate isomerase family. 6-phosphogluconolactonase subfamily.

It is found in the cytoplasm. The protein resides in the nucleus. Its function is as follows. May be involved in regulation of tRNA subcellular distribution. This chain is 6-phosphogluconolactonase-like protein 1 (SOL1), found in Saccharomyces cerevisiae (strain ATCC 204508 / S288c) (Baker's yeast).